The following is a 953-amino-acid chain: Serine-aspartate repeat-containing protein C (953 aa).

The N-terminal stretch at 1–50 (MNNKKTATNRKGMIPNRLNKFSIRKYSVGTASILVGTTLIFGLSGHEAKA) is a signal peptide. The interval 51-160 (AEHTNGELNQ…AKNVSTTPKT (110 aa)) is disordered. The tract at residues 51–495 (AEHTNGELNQ…GSSTANGDQK (445 aa)) is ligand binding A region. Residues 56–71 (GELNQSKNETTAPSEN) show a composition bias toward polar residues. Positions 72-83 (KTTEKVDSRQLK) are enriched in basic and acidic residues. Residues 84-114 (DNTQTATADQPKVTMSDSATVKETSSNMQSP) are compositionally biased toward polar residues. A compositionally biased stretch (low complexity) spans 115–132 (QNATASQSTTQTSNVTTN). Positions 133–160 (DKSSTTYSNETDKSNLTQAKNVSTTPKT) are enriched in polar residues. 2 CNA-B domains span residues 496-606 (KYNL…YKTP) and 607-717 (KYSL…EEET). Positions 678-933 (TQTGTNTTED…NNSNNGTLFG (256 aa)) are disordered. Composition is skewed to acidic residues over residues 685-695 (TEDDKDADGGE) and 712-892 (YYEE…DSDS). The LPXTG sorting signal motif lies at 916 to 920 (LPETG). Residues 918-933 (ETGSENNNSNNGTLFG) show a composition bias toward low complexity. Thr-919 is modified (pentaglycyl murein peptidoglycan amidated threonine). Positions 920–953 (GSENNNSNNGTLFGGLFAALGSLLLFGRRKKQNK) are cleaved as a propeptide — removed by sortase.

The protein belongs to the serine-aspartate repeat-containing protein (SDr) family. In terms of assembly, homodimerizes; via N2-Domain. Interacts with host NRXN1; this interaction mediates bacterial attachment to host cells.

Its subcellular location is the secreted. The protein resides in the cell wall. In terms of biological role, cell surface-associated calcium-binding protein which plays an important role in adhesion and pathogenesis. Mediates interactions with components of the extracellular matrix such as host NRXN1 to promote bacterial adhesion. The polypeptide is Serine-aspartate repeat-containing protein C (sdrC) (Staphylococcus aureus (strain Mu50 / ATCC 700699)).